The primary structure comprises 152 residues: Probable histone H2A.3 (152 aa).

Disordered regions lie at residues 1-25 (MDAS…KKSV) and 129-152 (KTER…PKKA). Positions 7 to 25 (TTKKGAGGRKGGGPRKKSV) are enriched in basic residues. Positions 129–142 (KTERANTGGKEPKT) are enriched in basic and acidic residues. The SPKK motif motif lies at 148–151 (SPKK).

This sequence belongs to the histone H2A family. In terms of assembly, the nucleosome is a histone octamer containing two molecules each of H2A, H2B, H3 and H4 assembled in one H3-H4 heterotetramer and two H2A-H2B heterodimers. The octamer wraps approximately 147 bp of DNA.

The protein localises to the nucleus. It is found in the chromosome. Its function is as follows. Core component of nucleosome. Nucleosomes wrap and compact DNA into chromatin, limiting DNA accessibility to the cellular machineries which require DNA as a template. Histones thereby play a central role in transcription regulation, DNA repair, DNA replication and chromosomal stability. DNA accessibility is regulated via a complex set of post-translational modifications of histones, also called histone code, and nucleosome remodeling. In Medicago truncatula (Barrel medic), this protein is Probable histone H2A.3.